Here is a 507-residue protein sequence, read N- to C-terminus: Germ cell nuclear acidic protein (507 aa).

Low complexity predominate over residues 1–51 (MDSGSSSSSSSSGSSSGSCSTSGSGSTSGSSTTSSSSSSSSSSSSSSSSSS). Residues 1–507 (MDSGSSSSSS…GRGRGAKAGK (507 aa)) form a disordered region. 4 short sequence motifs (SUMO interaction motif 1 (SIM)) span residues 12–15 (SGSS), 66–69 (CVVI), 86–89 (VCEI), and 108–111 (LIVI). 3 stretches are compositionally biased toward basic and acidic residues: residues 122-141 (KNTK…KEGV), 179-354 (SEAK…KGEM), and 431-449 (PQDR…RGDS). A compositionally biased stretch (basic residues) spans 480-507 (GRGRGRGRGRGRGRGRGRGRGRGAKAGK).

Belongs to the serine-aspartate repeat-containing protein (SDr) family. In terms of assembly, interacts (via SIM domains) with SUMO2; this interaction allows the GCNA recruitment to DPCs sites. Interacts with TOP2A; this interaction allows the resolution of topoisomerase II (TOP2A) DNA-protein cross-links. In terms of tissue distribution, germ-cells specific.

It localises to the chromosome. The protein localises to the nucleus. Its subcellular location is the PML body. In terms of biological role, may play a role in DNA-protein cross-links (DPCs) clearance through a SUMO-dependent recruitment to sites of DPCs, ensuring the genomic stability by protecting germ cells and early embryos from various sources of damage. Can resolve the topoisomerase II (TOP2A) DPCs. The protein is Germ cell nuclear acidic protein of Mus musculus (Mouse).